A 235-amino-acid chain; its full sequence is Small ribosomal subunit protein uS3 (235 aa).

Residues 39 to 107 (VRKFLLGQLS…PTKLNISEIR (69 aa)) form the KH type-2 domain.

This sequence belongs to the universal ribosomal protein uS3 family. As to quaternary structure, part of the 30S ribosomal subunit. Forms a tight complex with proteins S10 and S14.

Functionally, binds the lower part of the 30S subunit head. Binds mRNA in the 70S ribosome, positioning it for translation. This is Small ribosomal subunit protein uS3 from Blochmanniella floridana.